The sequence spans 529 residues: Peptide chain release factor 3 (529 aa).

One can recognise a tr-type G domain in the interval 11 to 280 (SKRRTFAIIS…GLTEWAPAPK (270 aa)). GTP contacts are provided by residues 20 to 27 (SHPDAGKT), 88 to 92 (DTPGH), and 142 to 145 (NKLD).

Belongs to the TRAFAC class translation factor GTPase superfamily. Classic translation factor GTPase family. PrfC subfamily.

It is found in the cytoplasm. In terms of biological role, increases the formation of ribosomal termination complexes and stimulates activities of RF-1 and RF-2. It binds guanine nucleotides and has strong preference for UGA stop codons. It may interact directly with the ribosome. The stimulation of RF-1 and RF-2 is significantly reduced by GTP and GDP, but not by GMP. The protein is Peptide chain release factor 3 of Vibrio campbellii (strain ATCC BAA-1116).